The primary structure comprises 257 residues: uncharacterized protein (257 aa).

NAD(+) is bound by residues Asp-34, Asp-60, Val-61, Asn-87, Tyr-152, and Lys-156. Residue Tyr-152 is the Proton acceptor of the active site.

This sequence belongs to the short-chain dehydrogenases/reductases (SDR) family.

This is an uncharacterized protein from Bacillus subtilis (strain 168).